The primary structure comprises 71 residues: Large ribosomal subunit protein bL31 (71 aa).

Cys16, Cys18, Cys37, and Cys40 together coordinate Zn(2+).

Belongs to the bacterial ribosomal protein bL31 family. Type A subfamily. In terms of assembly, part of the 50S ribosomal subunit. Zn(2+) serves as cofactor.

Binds the 23S rRNA. The chain is Large ribosomal subunit protein bL31 from Sodalis glossinidius (strain morsitans).